Consider the following 305-residue polypeptide: tRNA uridine(34) hydroxylase (305 aa).

One can recognise a Rhodanese domain in the interval 124–219; it reads QDEETLVVDT…YLETIPKEES (96 aa). The active-site Cysteine persulfide intermediate is cysteine 179.

Belongs to the TrhO family.

It catalyses the reaction uridine(34) in tRNA + AH2 + O2 = 5-hydroxyuridine(34) in tRNA + A + H2O. Its function is as follows. Catalyzes oxygen-dependent 5-hydroxyuridine (ho5U) modification at position 34 in tRNAs. The polypeptide is tRNA uridine(34) hydroxylase (Bartonella bacilliformis (strain ATCC 35685 / KC583 / Herrer 020/F12,63)).